The chain runs to 392 residues: MTAFPRTVMLLGSGELGKEVAIAAQRLGCRVIACDRYANAPAMQVADTAEVFQMTDATALKEVVQRHRPDVVIPEIEALAVEALAELEQDGITVIPTARATAFTMNRDQIRDLASGELGLHTARFAYASNAAELKKVAAPLGWPVVVKPVMSSSGKGQSVVQTPEQLDQAWEAAMANARGTSNQVIVEEFLEFDLEITLLTIRQRNGETLFCPPIGHEQERGDYQCSWQPAQMSDAQLQQAQTMARTVTDNLGGAGLFGVEFFLCGNEVIFSELSPRPHDTGLVTLISQNLSEFELHLRAVLNLPIPQLTTAPAAASRVILADRELKTVAYEGLEQALREAGTQVLLFGKPNARPNRRMGVALARGEDLSEVRAKADRAAACIQVLDGSARR.

Residues Glu-15–Leu-16 and Glu-75 each bind N(1)-(5-phospho-beta-D-ribosyl)glycinamide. Residues Arg-107, Lys-148, Ser-153–Gln-158, Glu-188–Leu-191, and Glu-196 contribute to the ATP site. In terms of domain architecture, ATP-grasp spans Asp-112–Leu-302. Residues Glu-261 and Glu-273 each coordinate Mg(2+). N(1)-(5-phospho-beta-D-ribosyl)glycinamide contacts are provided by residues Asp-280, Lys-350, and Arg-357 to Arg-358.

It belongs to the PurK/PurT family. In terms of assembly, homodimer.

The enzyme catalyses N(1)-(5-phospho-beta-D-ribosyl)glycinamide + formate + ATP = N(2)-formyl-N(1)-(5-phospho-beta-D-ribosyl)glycinamide + ADP + phosphate + H(+). It participates in purine metabolism; IMP biosynthesis via de novo pathway; N(2)-formyl-N(1)-(5-phospho-D-ribosyl)glycinamide from N(1)-(5-phospho-D-ribosyl)glycinamide (formate route): step 1/1. Its function is as follows. Involved in the de novo purine biosynthesis. Catalyzes the transfer of formate to 5-phospho-ribosyl-glycinamide (GAR), producing 5-phospho-ribosyl-N-formylglycinamide (FGAR). Formate is provided by PurU via hydrolysis of 10-formyl-tetrahydrofolate. This Synechococcus sp. (strain CC9902) protein is Formate-dependent phosphoribosylglycinamide formyltransferase.